A 518-amino-acid chain; its full sequence is Serine--tRNA ligase, mitochondrial (518 aa).

The transit peptide at 1–34 (MAASIVRRLGPLVAGRGLRLRGGCVCNQSFKRSF) directs the protein to the mitochondrion. At K110 the chain carries N6-acetyllysine. An N6-succinyllysine modification is found at K195. Residue 299-301 (TAE) coordinates L-serine. 330-332 (RAE) provides a ligand contact to ATP. N6-succinyllysine is present on K337. Position 345 (V345) interacts with ATP. An L-serine-binding site is contributed by E352. 418 to 421 (EVTS) contacts ATP. Residue T453 coordinates L-serine. A disordered region spans residues 497–518 (PLQYIGPNQPQKPRLPGQPASS).

The protein belongs to the class-II aminoacyl-tRNA synthetase family. Type-1 seryl-tRNA synthetase subfamily. Homodimer. The tRNA molecule probably binds across the dimer. In terms of processing, two N-termini starting at positions 35 and 37 have been identified by direct sequencing.

Its subcellular location is the mitochondrion matrix. The enzyme catalyses tRNA(Ser) + L-serine + ATP = L-seryl-tRNA(Ser) + AMP + diphosphate + H(+). It carries out the reaction tRNA(Sec) + L-serine + ATP = L-seryl-tRNA(Sec) + AMP + diphosphate + H(+). It functions in the pathway aminoacyl-tRNA biosynthesis; selenocysteinyl-tRNA(Sec) biosynthesis; L-seryl-tRNA(Sec) from L-serine and tRNA(Sec): step 1/1. In terms of biological role, catalyzes the attachment of serine to tRNA(Ser). Is also probably able to aminoacylate tRNA(Sec) with serine, to form the misacylated tRNA L-seryl-tRNA(Sec), which will be further converted into selenocysteinyl-tRNA(Sec). The sequence is that of Serine--tRNA ligase, mitochondrial (SARS2) from Bos taurus (Bovine).